The chain runs to 911 residues: Protein translocase subunit SecA (911 aa).

ATP contacts are provided by residues Gln-87, 105–109 (GEGKT), and Asp-512. Residues 861 to 893 (APGLESEQLSEEGAEVAVASAPVRNDQKLGRNE) are disordered. Zn(2+) contacts are provided by Cys-895, Cys-897, Cys-906, and His-907.

It belongs to the SecA family. As to quaternary structure, monomer and homodimer. Part of the essential Sec protein translocation apparatus which comprises SecA, SecYEG and auxiliary proteins SecDF-YajC and YidC. Zn(2+) serves as cofactor.

The protein localises to the cell inner membrane. Its subcellular location is the cytoplasm. It carries out the reaction ATP + H2O + cellular proteinSide 1 = ADP + phosphate + cellular proteinSide 2.. Functionally, part of the Sec protein translocase complex. Interacts with the SecYEG preprotein conducting channel. Has a central role in coupling the hydrolysis of ATP to the transfer of proteins into and across the cell membrane, serving both as a receptor for the preprotein-SecB complex and as an ATP-driven molecular motor driving the stepwise translocation of polypeptide chains across the membrane. The chain is Protein translocase subunit SecA from Pseudomonas putida (strain ATCC 700007 / DSM 6899 / JCM 31910 / BCRC 17059 / LMG 24140 / F1).